The sequence spans 177 residues: NAD(P)H-quinone oxidoreductase subunit 6, chloroplastic (177 aa).

Transmembrane regions (helical) follow at residues 10-30 (ILLVSLGSGIILGSLGVVLLT), 32-52 (PIYSAFSSGLVLVRISLFHIL), 61-81 (AQLLIYVGAINVLIIFAVMFM), 93-115 (WTVGDGISSVVCTSILFSLIATI), and 152-172 (FFLPFELISIILLVALVGAIA).

Belongs to the complex I subunit 6 family. In terms of assembly, NDH is composed of at least 16 different subunits, 5 of which are encoded in the nucleus.

The protein localises to the plastid. It is found in the chloroplast thylakoid membrane. It carries out the reaction a plastoquinone + NADH + (n+1) H(+)(in) = a plastoquinol + NAD(+) + n H(+)(out). The catalysed reaction is a plastoquinone + NADPH + (n+1) H(+)(in) = a plastoquinol + NADP(+) + n H(+)(out). Functionally, NDH shuttles electrons from NAD(P)H:plastoquinone, via FMN and iron-sulfur (Fe-S) centers, to quinones in the photosynthetic chain and possibly in a chloroplast respiratory chain. The immediate electron acceptor for the enzyme in this species is believed to be plastoquinone. Couples the redox reaction to proton translocation, and thus conserves the redox energy in a proton gradient. In Amborella trichopoda, this protein is NAD(P)H-quinone oxidoreductase subunit 6, chloroplastic (ndhG).